We begin with the raw amino-acid sequence, 163 residues long: 2-C-methyl-D-erythritol 2,4-cyclodiphosphate synthase (163 aa).

Residues aspartate 12 and histidine 14 each coordinate a divalent metal cation. 4-CDP-2-C-methyl-D-erythritol 2-phosphate contacts are provided by residues 12 to 14 and 38 to 39; these read DVH and HS. Histidine 46 serves as a coordination point for a divalent metal cation. 4-CDP-2-C-methyl-D-erythritol 2-phosphate is bound by residues 60 to 62, 136 to 139, phenylalanine 143, and arginine 146; these read DIG and TTSE.

The protein belongs to the IspF family. As to quaternary structure, homotrimer. It depends on a divalent metal cation as a cofactor.

The enzyme catalyses 4-CDP-2-C-methyl-D-erythritol 2-phosphate = 2-C-methyl-D-erythritol 2,4-cyclic diphosphate + CMP. Its pathway is isoprenoid biosynthesis; isopentenyl diphosphate biosynthesis via DXP pathway; isopentenyl diphosphate from 1-deoxy-D-xylulose 5-phosphate: step 4/6. Its function is as follows. Involved in the biosynthesis of isopentenyl diphosphate (IPP) and dimethylallyl diphosphate (DMAPP), two major building blocks of isoprenoid compounds. Catalyzes the conversion of 4-diphosphocytidyl-2-C-methyl-D-erythritol 2-phosphate (CDP-ME2P) to 2-C-methyl-D-erythritol 2,4-cyclodiphosphate (ME-CPP) with a corresponding release of cytidine 5-monophosphate (CMP). This Xanthomonas oryzae pv. oryzae (strain MAFF 311018) protein is 2-C-methyl-D-erythritol 2,4-cyclodiphosphate synthase.